The sequence spans 629 residues: Rho GTPase-activating protein conundrum (629 aa).

A required for interaction with Moe region spans residues 185–294 (PPKSGTYADI…CRDSSSLDSC (110 aa)). Residues 237 to 261 (SIGRSKESRSENDARSQKKKSSEVL) form a disordered region. A compositionally biased stretch (basic and acidic residues) spans 240-258 (RSKESRSENDARSQKKKSS). Residues 359–565 (VSINALIRRD…ILILRGEKLF (207 aa)) enclose the Rho-GAP domain.

As to quaternary structure, interacts with Moe (via FERM domain).

The protein localises to the cytoplasm. It localises to the cell membrane. It is found in the cell cortex. The protein resides in the cell junction. Its function is as follows. GTPase-activating protein (GAP) for Rho1; functions with the ERM protein Moe to regulate Rho1 and control proliferation in the developing epithelium. Recruited by Moe to the cell cortex where it negatively regulates Rho1 activity. Can also promote cell proliferation independently of its GAP activity, perhaps by acting with Arf6 to positively regulate Rac1. This Drosophila melanogaster (Fruit fly) protein is Rho GTPase-activating protein conundrum.